Here is a 137-residue protein sequence, read N- to C-terminus: MSQRTLVLLKPDAVRRGLTGEIISRIERKAGWAITALELRTLDQDTLEQHYGEHKGKPFYEPLVEFMASGPVVALVVEGERVIEGVRALAGPTDPIAAAPGSIRGDYGVIVRENLIHASDSEESAERELKIFFPGRV.

ATP contacts are provided by K10, F59, R87, T93, R104, and N114. H117 acts as the Pros-phosphohistidine intermediate in catalysis.

Belongs to the NDK family. In terms of assembly, homotetramer. It depends on Mg(2+) as a cofactor.

Its subcellular location is the cytoplasm. The catalysed reaction is a 2'-deoxyribonucleoside 5'-diphosphate + ATP = a 2'-deoxyribonucleoside 5'-triphosphate + ADP. The enzyme catalyses a ribonucleoside 5'-diphosphate + ATP = a ribonucleoside 5'-triphosphate + ADP. In terms of biological role, major role in the synthesis of nucleoside triphosphates other than ATP. The ATP gamma phosphate is transferred to the NDP beta phosphate via a ping-pong mechanism, using a phosphorylated active-site intermediate. The chain is Nucleoside diphosphate kinase from Streptomyces avermitilis (strain ATCC 31267 / DSM 46492 / JCM 5070 / NBRC 14893 / NCIMB 12804 / NRRL 8165 / MA-4680).